The following is a 126-amino-acid chain: UPF0235 protein C15orf40 homolog (126 aa).

The tract at residues 1–33 is disordered; that stretch reads MPKKAGATSKGKNQTKEPETPPPPTGPVATDSK. At Ser89 the chain carries Phosphoserine.

The protein belongs to the UPF0235 family.

The polypeptide is UPF0235 protein C15orf40 homolog (Rattus norvegicus (Rat)).